Here is a 137-residue protein sequence, read N- to C-terminus: Small ribosomal subunit protein uS9 (137 aa).

Positions 105-117 are enriched in basic and acidic residues; it reads LKVEGYLTRDPRA. Residues 105-137 are disordered; that stretch reads LKVEGYLTRDPRAKERKKYGLRKARKAPQYSKR. Positions 118-137 are enriched in basic residues; the sequence is KERKKYGLRKARKAPQYSKR.

It belongs to the universal ribosomal protein uS9 family.

This chain is Small ribosomal subunit protein uS9, found in Cyanothece sp. (strain PCC 7425 / ATCC 29141).